Consider the following 831-residue polypeptide: Multiphosphoryl transfer protein (831 aa).

The 90-residue stretch at 1–90 folds into the HPr domain; that stretch reads MLTIQFLCPL…EYILVRFIDS (90 aa). The active-site Pros-phosphohistidine intermediate; for HPr activity is the His15. His15 bears the Phosphohistidine; by EI mark. The PTS EI stretch occupies residues 119-650; sequence GNVLASGVGV…AVKSQLRQLD (532 aa). Catalysis depends on His298, which acts as the Tele-phosphohistidine intermediate; for PTS EI activity. At His298 the chain carries Phosphohistidine; by autocatalysis. Positions 405 and 441 each coordinate phosphoenolpyruvate. Mg(2+) is bound by residues Glu540 and Asp564. Residues 563 to 564 and Arg574 contribute to the phosphoenolpyruvate site; that span reads ND. The active-site Proton donor; for EI activity is Cys611. The PTS EIIA type-2 domain maps to 685 to 828; that stretch reads PLLALENIFV…QSILTLLETE (144 aa). Residue His747 is the Tele-phosphohistidine intermediate; for PTS EIIA activity of the active site. His747 carries the phosphohistidine; by HPr modification.

This sequence belongs to the PEP-utilizing enzyme family. It depends on Mg(2+) as a cofactor.

It is found in the cytoplasm. It carries out the reaction L-histidyl-[protein] + phosphoenolpyruvate = N(pros)-phospho-L-histidyl-[protein] + pyruvate. It catalyses the reaction D-fructose(out) + N(pros)-phospho-L-histidyl-[protein] = D-fructose 1-phosphate(in) + L-histidyl-[protein]. Multifunctional protein that includes general (non sugar-specific) and sugar-specific components of the phosphoenolpyruvate-dependent sugar phosphotransferase system (sugar PTS). This major carbohydrate active transport system catalyzes the phosphorylation of incoming sugar substrates concomitantly with their translocation across the cell membrane. The enzyme II FryABC PTS system is involved in fructose transport. This is Multiphosphoryl transfer protein (fryA) from Shigella flexneri.